The sequence spans 325 residues: Aldo-keto reductase family 1 member A1 (325 aa).

The residue at position 2 (Thr2) is an N-acetylthreonine. Ser4 is subject to Phosphoserine. Residues 11–20, Thr21, and Trp22 contribute to the NADP(+) site; that span reads GQKMPLIGLG. An N-linked (Glc) (glycation) lysine glycan is attached at Lys23. Position 38 is a phosphoserine (Ser38). NADP(+) is bound at residue Asp45. Tyr50 functions as the Proton donor in the catalytic mechanism. Residues Lys68 and Lys85 are each glycosylated (N-linked (Glc) (glycation) lysine). Lys127 carries the post-translational modification N6-acetyllysine; alternate. Lys127 is subject to N6-succinyllysine; alternate. An N-linked (Glc) (glycation) lysine glycan is attached at Lys141. An N6-succinyllysine modification is found at Lys145. An N-linked (Glc) (glycation) lysine glycan is attached at Lys153. NADP(+) is bound by residues Ser162, Asn163, Ser211, Leu213, Ser215, Ser216, Lys263, Ser264, Ile265, Thr266, Arg269, Gln272, and Asn273. Ser211 is modified (phosphoserine).

Belongs to the aldo/keto reductase family. In terms of assembly, monomer. As to expression, widely expressed.

Its subcellular location is the cytoplasm. It localises to the cytosol. The protein resides in the apical cell membrane. The catalysed reaction is a primary alcohol + NADP(+) = an aldehyde + NADPH + H(+). It carries out the reaction L-gulonate + NADP(+) = aldehydo-D-glucuronate + NADPH + H(+). The enzyme catalyses L-gulono-1,4-lactone + NADP(+) = D-glucurono-3,6-lactone + NADPH + H(+). It catalyses the reaction allyl alcohol + NADP(+) = acrolein + NADPH + H(+). The catalysed reaction is glycerol + NADP(+) = D-glyceraldehyde + NADPH + H(+). It carries out the reaction glycerol + NADP(+) = L-glyceraldehyde + NADPH + H(+). The enzyme catalyses hydroxyacetone + NADP(+) = methylglyoxal + NADPH + H(+). It catalyses the reaction 3-deoxyfructose + NADP(+) = 3-deoxyglucosone + NADPH + H(+). The catalysed reaction is (R)-mevalonate + NADP(+) = (R)-mevaldate + NADPH + H(+). It carries out the reaction pyridine 3-methanol + NADP(+) = pyridine-3-carbaldehyde + NADPH + H(+). The enzyme catalyses S-nitroso-CoA + NADPH + H(+) = sulfinamide-CoA + NADP(+). It catalyses the reaction S-nitrosoglutathione + NADPH + H(+) = S-(hydroxysulfenamide)glutathione + NADP(+). In terms of biological role, catalyzes the NADPH-dependent reduction of a wide variety of carbonyl-containing compounds to their corresponding alcohols. Displays enzymatic activity towards endogenous metabolites such as aromatic and aliphatic aldehydes, ketones, monosaccharides and bile acids. Plays an important role in ascorbic acid biosynthesis by catalyzing the reduction of D-glucuronic acid and D-glucurono-gamma-lactone. Functions as a detoxifiying enzyme by reducing a range of toxic aldehydes. Reduces methylglyoxal and 3-deoxyglucosone, which are present at elevated levels under hyperglycemic conditions and are cytotoxic. Involved also in the detoxification of lipid-derived aldehydes like acrolein. Plays a role in the activation of procarcinogens, such as polycyclic aromatic hydrocarbon trans-dihydrodiols, and in the metabolism of various xenobiotics and drugs. Also acts as an inhibitor of protein S-nitrosylation by mediating degradation of S-nitroso-coenzyme A (S-nitroso-CoA), a cofactor required to S-nitrosylate proteins. S-nitroso-CoA reductase activity is involved in reprogramming intermediary metabolism in renal proximal tubules, notably by inhibiting protein S-nitrosylation of isoform 2 of PKM (PKM2). Also acts as a S-nitroso-glutathione reductase by catalyzing the NADPH-dependent reduction of S-nitrosoglutathione. Displays no reductase activity towards retinoids. The sequence is that of Aldo-keto reductase family 1 member A1 (Akr1a1) from Rattus norvegicus (Rat).